We begin with the raw amino-acid sequence, 418 residues long: Tyrosine--tRNA ligase (418 aa).

Tyr34 provides a ligand contact to L-tyrosine. Positions Pro39–His48 match the 'HIGH' region motif. L-tyrosine is bound by residues Tyr169 and Gln173. Positions Lys229–Ser233 match the 'KMSKS' region motif. Residue Lys232 participates in ATP binding. In terms of domain architecture, S4 RNA-binding spans Leu352–Tyr418.

Belongs to the class-I aminoacyl-tRNA synthetase family. TyrS type 1 subfamily. Homodimer.

It is found in the cytoplasm. The catalysed reaction is tRNA(Tyr) + L-tyrosine + ATP = L-tyrosyl-tRNA(Tyr) + AMP + diphosphate + H(+). In terms of biological role, catalyzes the attachment of tyrosine to tRNA(Tyr) in a two-step reaction: tyrosine is first activated by ATP to form Tyr-AMP and then transferred to the acceptor end of tRNA(Tyr). This is Tyrosine--tRNA ligase from Streptococcus pyogenes serotype M5 (strain Manfredo).